Reading from the N-terminus, the 137-residue chain is Large ribosomal subunit protein uL16 (137 aa).

The protein belongs to the universal ribosomal protein uL16 family. In terms of assembly, part of the 50S ribosomal subunit.

Its function is as follows. Binds 23S rRNA and is also seen to make contacts with the A and possibly P site tRNAs. This chain is Large ribosomal subunit protein uL16, found in Mesorhizobium japonicum (strain LMG 29417 / CECT 9101 / MAFF 303099) (Mesorhizobium loti (strain MAFF 303099)).